Reading from the N-terminus, the 272-residue chain is Proteasome subunit beta type-5 (272 aa).

A propeptide spans 1–62 (MINIDFDNIE…APKALEFAHG (62 aa)) (removed in mature form). The active-site Nucleophile is T63.

This sequence belongs to the peptidase T1B family. The 26S proteasome consists of a 20S proteasome core and two 19S regulatory subunits. The 20S proteasome core is composed of 28 subunits that are arranged in four stacked rings, resulting in a barrel-shaped structure. The two end rings are each formed by seven alpha subunits, and the two central rings are each formed by seven beta subunits. The catalytic chamber with the active sites is on the inside of the barrel.

Its subcellular location is the cytoplasm. It localises to the nucleus. The catalysed reaction is Cleavage of peptide bonds with very broad specificity.. The proteasome is a multicatalytic proteinase complex which is characterized by its ability to cleave peptides with Arg, Phe, Tyr, Leu, and Glu adjacent to the leaving group at neutral or slightly basic pH. The proteasome has an ATP-dependent proteolytic activity. The protein is Proteasome subunit beta type-5 (psmB5) of Dictyostelium discoideum (Social amoeba).